Reading from the N-terminus, the 357-residue chain is Set1 complex component swd2 (357 aa).

WD repeat units lie at residues 24–65 (NFVG…KSLA), 110–149 (GHKQ…CQGL), 199–241 (PPHV…RVPS), and 247–289 (TQDG…QTVN).

The protein belongs to the WD repeat SWD2 family. Component of the Set1 complex composed of ash2, sdc1, set1, shg1, spp1, swd1, swd2 and swd3.

The protein localises to the nucleus. Its function is as follows. The Set1 complex specifically methylates 'Lys-4' of histone H3. This Schizosaccharomyces pombe (strain 972 / ATCC 24843) (Fission yeast) protein is Set1 complex component swd2.